The chain runs to 405 residues: L-rhamnonate dehydratase (405 aa).

H33 and R59 together coordinate substrate. The Mg(2+) site is built by D226, E252, and E280. H329 acts as the Proton acceptor in catalysis. Residue E349 coordinates substrate.

This sequence belongs to the mandelate racemase/muconate lactonizing enzyme family. RhamD subfamily. As to quaternary structure, homooctamer; tetramer of dimers. Requires Mg(2+) as cofactor.

It carries out the reaction L-rhamnonate = 2-dehydro-3-deoxy-L-rhamnonate + H2O. In terms of biological role, catalyzes the dehydration of L-rhamnonate to 2-keto-3-deoxy-L-rhamnonate (KDR). This chain is L-rhamnonate dehydratase, found in Salmonella paratyphi C (strain RKS4594).